The chain runs to 315 residues: 4-hydroxy-3-methylbut-2-enyl diphosphate reductase (315 aa).

Cys12 serves as a coordination point for [4Fe-4S] cluster. (2E)-4-hydroxy-3-methylbut-2-enyl diphosphate contacts are provided by His41 and His74. Positions 41 and 74 each coordinate dimethylallyl diphosphate. The isopentenyl diphosphate site is built by His41 and His74. Residue Cys96 participates in [4Fe-4S] cluster binding. His124 is a (2E)-4-hydroxy-3-methylbut-2-enyl diphosphate binding site. Dimethylallyl diphosphate is bound at residue His124. His124 contributes to the isopentenyl diphosphate binding site. The active-site Proton donor is Glu126. Thr168 is a (2E)-4-hydroxy-3-methylbut-2-enyl diphosphate binding site. Residue Cys198 coordinates [4Fe-4S] cluster. (2E)-4-hydroxy-3-methylbut-2-enyl diphosphate is bound by residues Ser226, Ser227, Asn228, and Ser270. Dimethylallyl diphosphate-binding residues include Ser226, Ser227, Asn228, and Ser270. Ser226, Ser227, Asn228, and Ser270 together coordinate isopentenyl diphosphate.

Belongs to the IspH family. [4Fe-4S] cluster is required as a cofactor.

The catalysed reaction is isopentenyl diphosphate + 2 oxidized [2Fe-2S]-[ferredoxin] + H2O = (2E)-4-hydroxy-3-methylbut-2-enyl diphosphate + 2 reduced [2Fe-2S]-[ferredoxin] + 2 H(+). It catalyses the reaction dimethylallyl diphosphate + 2 oxidized [2Fe-2S]-[ferredoxin] + H2O = (2E)-4-hydroxy-3-methylbut-2-enyl diphosphate + 2 reduced [2Fe-2S]-[ferredoxin] + 2 H(+). It functions in the pathway isoprenoid biosynthesis; dimethylallyl diphosphate biosynthesis; dimethylallyl diphosphate from (2E)-4-hydroxy-3-methylbutenyl diphosphate: step 1/1. It participates in isoprenoid biosynthesis; isopentenyl diphosphate biosynthesis via DXP pathway; isopentenyl diphosphate from 1-deoxy-D-xylulose 5-phosphate: step 6/6. Catalyzes the conversion of 1-hydroxy-2-methyl-2-(E)-butenyl 4-diphosphate (HMBPP) into a mixture of isopentenyl diphosphate (IPP) and dimethylallyl diphosphate (DMAPP). Acts in the terminal step of the DOXP/MEP pathway for isoprenoid precursor biosynthesis. The polypeptide is 4-hydroxy-3-methylbut-2-enyl diphosphate reductase (Pseudomonas putida (strain W619)).